Reading from the N-terminus, the 361-residue chain is Cyclic AMP receptor-like protein C (361 aa).

The Extracellular portion of the chain corresponds to 1–18; that stretch reads MGIEESQICNPSDREFLS. Residues 19 to 39 traverse the membrane as a helical segment; that stretch reads VDILNIVTSSLSLMGSALTII. The Cytoplasmic portion of the chain corresponds to 40 to 113; the sequence is SYIWKKVRRH…HGTYKQPTSK (74 aa). A helical transmembrane segment spans residues 114-134; it reads LPLLIFMLSIADFFTSFFIII. Over 135-166 the chain is Extracellular; it reads SQSYLINNSKSYSTPYSPDLKIHFSPCIILRA. Residues 167–187 traverse the membrane as a helical segment; that stretch reads IIQFFFLSTFFWTTCISYYLF. At 188-197 the chain is on the cytoplasmic side; it reads HQLSSPGEEK. Residues 198 to 218 form a helical membrane-spanning segment; the sequence is YLLAIFNVVSWGIPFAISMVI. Over 219–238 the chain is Extracellular; sequence TMTNSIVVNSDGWCEVAKPM. Residues 239-259 traverse the membrane as a helical segment; that stretch reads ELSLWFLPLFLCLLVCSIYYF. The Cytoplasmic portion of the chain corresponds to 260–292; it reads RLRRLFRSKFEYRLQINDRLKQLDSTISRRLTL. A helical membrane pass occupies residues 293–313; that stretch reads YIVVFVICWLPDVIQHFISFF. Residues 314 to 318 lie on the Extracellular side of the membrane; the sequence is SKCTF. The chain crosses the membrane as a helical span at residues 319 to 339; sequence FPLLILQNILTPSQGFWNFWI. Residues 340 to 361 are Cytoplasmic-facing; the sequence is YSYTNKIARFTPSNDENKRLLQ.

The protein belongs to the G-protein coupled receptor 5 family.

It localises to the membrane. Its function is as follows. Receptor for cAMP. In Dictyostelium discoideum (Social amoeba), this protein is Cyclic AMP receptor-like protein C (crlC).